The following is a 258-amino-acid chain: Neurotrophin-3 (258 aa).

Residues 1 to 18 (MSILFYVIFLAYLRGIQG) form the signal peptide. The propeptide occupies 19–139 (NSMDQRSLPE…ANRTSPRRKR (121 aa)). The tract at residues 60–85 (QSTLPKAEAPREPEQGEATRSEFQPM) is disordered. Basic and acidic residues predominate over residues 67 to 79 (EAPREPEQGEATR). Asparagine 131 carries N-linked (GlcNAc...) asparagine glycosylation. Intrachain disulfides connect cysteine 153-cysteine 218, cysteine 196-cysteine 247, and cysteine 206-cysteine 249.

The protein belongs to the NGF-beta family. As to expression, brain and peripheral tissues.

The protein resides in the secreted. Seems to promote the survival of visceral and proprioceptive sensory neurons. This chain is Neurotrophin-3 (Ntf3), found in Mus musculus (Mouse).